Reading from the N-terminus, the 706-residue chain is Solute carrier organic anion transporter family member 6C1 (706 aa).

The segment at 1 to 24 is disordered; sequence MAHVRNKKSDDKKAMVVAKEDTNK. The Cytoplasmic segment spans residues 1-94; sequence MAHVRNKKSD…PFVQRFNNID (94 aa). Basic and acidic residues predominate over residues 7 to 24; that stretch reads KKSDDKKAMVVAKEDTNK. A helical transmembrane segment spans residues 95-118; that stretch reads GFMTLYVAAVLIHGALFAVVDMTL. Residues 119–130 lie on the Extracellular side of the membrane; it reads NIYQVQFSLTRT. The helical transmembrane segment at 131-151 threads the bilayer; the sequence is EWYLMDFSDYIASFVVAIIIA. Topologically, residues 152–159 are cytoplasmic; the sequence is HFGSKGNR. Residues 160-180 traverse the membrane as a helical segment; that stretch reads TRWIAASCILMGLESMLFAFP. Residues 181–218 lie on the Extracellular side of the membrane; it reads FFTYEIIIPGRQSIELCMEENEKRNIICGNSVPNRSKC. Residue N214 is glycosylated (N-linked (GlcNAc...) asparagine). The chain crosses the membrane as a helical span at residues 219–241; that stretch reads IYFHIAGQCIHGIAGMPIYILGI. Residues 242 to 253 lie on the Cytoplasmic side of the membrane; the sequence is TFIFDHIPTSSC. The chain crosses the membrane as a helical span at residues 254–277; sequence GFYLAIGHSAYLIGYLLGMVGGLQ. Residues 278–301 are Extracellular-facing; that stretch reads NFQPPPKEKTVEIEPAKVYQLLQS. The chain crosses the membrane as a helical span at residues 302-324; it reads GWWKTFLIIAAISFCVSFMMVCF. The Cytoplasmic segment spans residues 325–374; that stretch reads PTSLPGAHKLRLAKRKEPPTIDRRLKDMKIQPHLKGFLHNIWHILKNPLM. Residues 375–396 form a helical membrane-spanning segment; the sequence is LTQAICKVSEYLTFNTSLYFLP. Over 397–410 the chain is Extracellular; the sequence is HHLQTQFLITPGIA. Residues 411 to 432 form a helical membrane-spanning segment; it reads SLLTGAFVLPGGIIGHFLGGLI. Residues 433–445 lie on the Cytoplasmic side of the membrane; sequence VDRLEMTNKNKLK. Residues 446 to 466 traverse the membrane as a helical segment; sequence FTLVTTVVSVGLFLLIFFVEC. Topologically, residues 467-565 are extracellular; sequence QTTTFAGINE…IAGTCDSDCL (99 aa). In terms of domain architecture, Kazal-like spans 485–540; the sequence is GNLTADCNEYCDCTTSLYTSICGRDEKEYFSPCFAGCKATKVSQTEKTYYNCSCIK. N486 carries N-linked (GlcNAc...) asparagine glycosylation. 3 cysteine pairs are disulfide-bonded: C491/C521, C497/C517, and C506/C538. An N-linked (GlcNAc...) asparagine glycan is attached at N535. A helical transmembrane segment spans residues 566-589; it reads KLPLFFAFYFSATVFSNMCSIPVI. Topologically, residues 590–604 are cytoplasmic; sequence SIILQSVPANFTSLS. The helical transmembrane segment at 605 to 624 threads the bilayer; that stretch reads LGVTYAIVKFVASVPAPLLF. Topologically, residues 625 to 652 are extracellular; sequence RLSSAIACIYWDNNRCGGKERCWIYNKN. A helical membrane pass occupies residues 653-675; it reads ILVYEFMGIWMSSQLIIVLLNIY. Topologically, residues 676–706 are cytoplasmic; sequence AIQIHDVVVHGEITESKTTVKDVKEQKERKA.

This sequence belongs to the organo anion transporter (TC 2.A.60) family. In terms of assembly, component of the CatSper complex or CatSpermasome composed of the core pore-forming members CATSPER1, CATSPER2, CATSPER3 and CATSPER4 as well as auxiliary members CATSPERB, CATSPERG2, CATSPERD, CATSPERE, CATSPERZ, C2CD6/CATSPERT, SLCO6C1, TMEM249, TMEM262 and EFCAB9. HSPA1 may be an additional auxiliary complex member. The core complex members CATSPER1, CATSPER2, CATSPER3 and CATSPER4 form a heterotetrameric channel. The auxiliary CATSPERB, CATSPERG2, CATSPERD and CATSPERE subunits form a pavilion-like structure over the pore which stabilizes the complex through interactions with CATSPER4, CATSPER3, CATSPER1 and CATSPER2 respectively. SLCO6C1 interacts with CATSPERE and TMEM262/CATSPERH interacts with CATSPERB, further stabilizing the complex. C2CD6/CATSPERT interacts at least with CATSPERD and is required for targeting the CatSper complex in the flagellar membrane.

It localises to the cell projection. It is found in the cilium. Its subcellular location is the flagellum membrane. In terms of biological role, auxiliary component of the CatSper complex, a complex involved in sperm cell hyperactivation. The polypeptide is Solute carrier organic anion transporter family member 6C1 (Mus musculus (Mouse)).